Reading from the N-terminus, the 550-residue chain is Coiled-coil domain-containing protein 60 (550 aa).

The disordered stretch occupies residues 1-21 (MTKVPATKKLQSSPNSGAVRP). Residues 71–98 (AILREETAKKKKQQQLQKLKEEERNKFQ) adopt a coiled-coil conformation. 2 disordered regions span residues 219–293 (KFKI…EPLY) and 336–367 (AYKEMQTTLKSSERSSSTSAESHIQPVQKKSK). A compositionally biased stretch (low complexity) spans 235-256 (RGSTLSLSRASGGSSPQSSMIS). The segment covering 336–345 (AYKEMQTTLK) has biased composition (polar residues).

This is Coiled-coil domain-containing protein 60 (CCDC60) from Homo sapiens (Human).